The following is a 287-amino-acid chain: Shikimate dehydrogenase (NADP(+)) (287 aa).

Residues 20 to 22 and T67 each bind shikimate; that span reads SRS. The Proton acceptor role is filled by K71. Residue E84 coordinates NADP(+). 2 residues coordinate shikimate: N93 and D108. NADP(+)-binding positions include 132–136, 156–161, and M226; these read GAGGA and NRTAAR. Position 228 (Y228) interacts with shikimate. G250 is an NADP(+) binding site.

The protein belongs to the shikimate dehydrogenase family. Homodimer.

The enzyme catalyses shikimate + NADP(+) = 3-dehydroshikimate + NADPH + H(+). It functions in the pathway metabolic intermediate biosynthesis; chorismate biosynthesis; chorismate from D-erythrose 4-phosphate and phosphoenolpyruvate: step 4/7. Functionally, involved in the biosynthesis of the chorismate, which leads to the biosynthesis of aromatic amino acids. Catalyzes the reversible NADPH linked reduction of 3-dehydroshikimate (DHSA) to yield shikimate (SA). The protein is Shikimate dehydrogenase (NADP(+)) of Bordetella pertussis (strain Tohama I / ATCC BAA-589 / NCTC 13251).